We begin with the raw amino-acid sequence, 215 residues long: 3-demethoxyubiquinol 3-hydroxylase (215 aa).

Fe cation-binding residues include glutamate 64, glutamate 94, histidine 97, glutamate 146, glutamate 178, and histidine 181.

Belongs to the COQ7 family. It depends on Fe cation as a cofactor.

The protein resides in the cell membrane. The enzyme catalyses a 5-methoxy-2-methyl-3-(all-trans-polyprenyl)benzene-1,4-diol + AH2 + O2 = a 3-demethylubiquinol + A + H2O. The protein operates within cofactor biosynthesis; ubiquinone biosynthesis. Functionally, catalyzes the hydroxylation of 2-nonaprenyl-3-methyl-6-methoxy-1,4-benzoquinol during ubiquinone biosynthesis. This Pseudomonas fluorescens (strain SBW25) protein is 3-demethoxyubiquinol 3-hydroxylase.